The primary structure comprises 212 residues: Peptide methionine sulfoxide reductase MsrA (212 aa).

Cysteine 52 is an active-site residue.

This sequence belongs to the MsrA Met sulfoxide reductase family.

It carries out the reaction L-methionyl-[protein] + [thioredoxin]-disulfide + H2O = L-methionyl-(S)-S-oxide-[protein] + [thioredoxin]-dithiol. It catalyses the reaction [thioredoxin]-disulfide + L-methionine + H2O = L-methionine (S)-S-oxide + [thioredoxin]-dithiol. In terms of biological role, has an important function as a repair enzyme for proteins that have been inactivated by oxidation. Catalyzes the reversible oxidation-reduction of methionine sulfoxide in proteins to methionine. The chain is Peptide methionine sulfoxide reductase MsrA from Yersinia enterocolitica serotype O:8 / biotype 1B (strain NCTC 13174 / 8081).